Here is a 395-residue protein sequence, read N- to C-terminus: MDLKDNSFAKKRSTVFVVLLIVFCFFLMFSAFADGFNFWSPWSTDFNSRVIHIKSDGNIETTSIVSHELHPDFKAVRFAFGLVIVLFISVIAVLMNWELSNSIFKNYEKLNLSLSLLSGIMVSGGMIPTFFVIYFREWNATVNWIWTASFAGMIVFLWAVYMISTSFIKIRPSLQVIYSLGAVICFIACIGTIYFSVIRGWTTIFLLIAIGVCTDTFAYLFGKRFGKNPLIKISPSKTWEGAFFGVTGTVLTISIICVLYSIPNYVRQPSIKDASKTALQTPQNYDVHNLITNVFLISFISGGSTFYIYWWVSTLALIFTASIFAIGGDLFFSYIKRLTKIKDFSKLLGKHGGILDRFDSSSFLISFFFIYHVIAGISSNQRLLMEPNTYFSAVS.

The next 9 membrane-spanning stretches (helical) occupy residues 13–33 (STVF…SAFA), 78–98 (FAFG…MNWE), 115–135 (SLLS…VIYF), 144–164 (WIWT…YMIS), 177–197 (IYSL…YFSV), 201–221 (WTTI…AYLF), 242–262 (AFFG…LYSI), 306–326 (FYIY…IFAI), and 358–378 (FDSS…AGIS).

Belongs to the CDS family.

The protein resides in the cell membrane. The enzyme catalyses a 1,2-diacyl-sn-glycero-3-phosphate + CTP + H(+) = a CDP-1,2-diacyl-sn-glycerol + diphosphate. Its pathway is phospholipid metabolism; CDP-diacylglycerol biosynthesis; CDP-diacylglycerol from sn-glycerol 3-phosphate: step 3/3. In Mycoplasma pneumoniae (strain ATCC 29342 / M129 / Subtype 1) (Mycoplasmoides pneumoniae), this protein is Putative phosphatidate cytidylyltransferase (cdsA).